The primary structure comprises 277 residues: 3-methyl-2-oxobutanoate hydroxymethyltransferase (277 aa).

The Mg(2+) site is built by D43 and D82. 3-methyl-2-oxobutanoate contacts are provided by residues 43–44, D82, and K112; that span reads DS. E114 serves as a coordination point for Mg(2+). The active-site Proton acceptor is E181.

This sequence belongs to the PanB family. In terms of assembly, homodecamer; pentamer of dimers. It depends on Mg(2+) as a cofactor.

Its subcellular location is the cytoplasm. It catalyses the reaction 3-methyl-2-oxobutanoate + (6R)-5,10-methylene-5,6,7,8-tetrahydrofolate + H2O = 2-dehydropantoate + (6S)-5,6,7,8-tetrahydrofolate. It functions in the pathway cofactor biosynthesis; (R)-pantothenate biosynthesis; (R)-pantoate from 3-methyl-2-oxobutanoate: step 1/2. Its function is as follows. Catalyzes the reversible reaction in which hydroxymethyl group from 5,10-methylenetetrahydrofolate is transferred onto alpha-ketoisovalerate to form ketopantoate. This is 3-methyl-2-oxobutanoate hydroxymethyltransferase from Bacillus velezensis (strain DSM 23117 / BGSC 10A6 / LMG 26770 / FZB42) (Bacillus amyloliquefaciens subsp. plantarum).